Consider the following 396-residue polypeptide: Protein Njmu-R1 (396 aa).

Residues 1-78 (MLPSLQESMD…SGDDFSLSLA (78 aa)) are disordered. Phosphoserine is present on residues serine 8 and serine 18. A compositionally biased stretch (acidic residues) spans 9-24 (MDGDEKELESSEEGGS). The span at 58–67 (GSPSGTNAET) shows a compositional bias: polar residues.

In terms of assembly, component of the complex WDR11 composed of C17orf75, FAM91A1 and WDR11; FAM91A1 and WDR11 are required for proper location of the complex. Interacts with TBC1D23; this interaction may be indirect and recruits TBC1D23 to AP-1-derived vesicles. Highly expressed in testis and also expressed in fetal testis.

The protein localises to the golgi apparatus. Its subcellular location is the trans-Golgi network. It is found in the cytoplasmic vesicle. Its function is as follows. As component of the WDR11 complex acts together with TBC1D23 to facilitate the golgin-mediated capture of vesicles generated using AP-1. May have a role in spermatogenesis. In Homo sapiens (Human), this protein is Protein Njmu-R1 (C17orf75).